We begin with the raw amino-acid sequence, 367 residues long: UDP-N-acetylglucosamine--N-acetylmuramyl-(pentapeptide) pyrophosphoryl-undecaprenol N-acetylglucosamine transferase (367 aa).

UDP-N-acetyl-alpha-D-glucosamine is bound by residues Thr-13 to Gly-15, Arg-168, Ser-196, Ile-252, and Gln-297.

This sequence belongs to the glycosyltransferase 28 family. MurG subfamily.

Its subcellular location is the cell inner membrane. It catalyses the reaction di-trans,octa-cis-undecaprenyl diphospho-N-acetyl-alpha-D-muramoyl-L-alanyl-D-glutamyl-meso-2,6-diaminopimeloyl-D-alanyl-D-alanine + UDP-N-acetyl-alpha-D-glucosamine = di-trans,octa-cis-undecaprenyl diphospho-[N-acetyl-alpha-D-glucosaminyl-(1-&gt;4)]-N-acetyl-alpha-D-muramoyl-L-alanyl-D-glutamyl-meso-2,6-diaminopimeloyl-D-alanyl-D-alanine + UDP + H(+). It participates in cell wall biogenesis; peptidoglycan biosynthesis. Cell wall formation. Catalyzes the transfer of a GlcNAc subunit on undecaprenyl-pyrophosphoryl-MurNAc-pentapeptide (lipid intermediate I) to form undecaprenyl-pyrophosphoryl-MurNAc-(pentapeptide)GlcNAc (lipid intermediate II). The chain is UDP-N-acetylglucosamine--N-acetylmuramyl-(pentapeptide) pyrophosphoryl-undecaprenol N-acetylglucosamine transferase from Methylibium petroleiphilum (strain ATCC BAA-1232 / LMG 22953 / PM1).